Reading from the N-terminus, the 288-residue chain is MALVSMKEMLKKAKAGHYAVGQFNLNNLQWAQAILQAAEEEQAPVIVAASDRLVDFLGGFQTITSMVNSLLIEMKITVPVALHLDHGMTIDRCKQAIDAGFTSVMIDGSHSPIEDNIAMTKEVVAYAQPRNVSVEAEVGTVGGMEDGLIGGVKYADLDECVRVVEEANIDALAAALGSVHGPYQGEPKLGFEEMKVISERTGVPLVLHGGSGIPDYQIRKAILLGHAKINVNTECLQAWAHAVRTILTNDQDIYDYRAITTPGTEAIVETVKTKMREFQTSGKAKERV.

Asp85 serves as the catalytic Proton donor. Zn(2+) contacts are provided by His86 and His180. A dihydroxyacetone phosphate-binding site is contributed by Gly181. Residue His208 coordinates Zn(2+). Dihydroxyacetone phosphate is bound by residues 209-211 and 230-233; these read GGS and NVNT. At Thr233 the chain carries Phosphothreonine.

The protein belongs to the class II fructose-bisphosphate aldolase family. IolJ subfamily. It depends on Zn(2+) as a cofactor.

The enzyme catalyses 6-phospho-5-dehydro-2-deoxy-D-gluconate = 3-oxopropanoate + dihydroxyacetone phosphate. It participates in polyol metabolism; myo-inositol degradation into acetyl-CoA; acetyl-CoA from myo-inositol: step 6/7. In terms of biological role, produces dihydroxyacetone phosphate (DHAP or glycerone phosphate) and malonic semialdehyde (MSA or 3-oxopropanoate) from 6-phospho-5-dehydro-2-deoxy-D-gluconate (DKGP). The protein is 6-phospho-5-dehydro-2-deoxy-D-gluconate aldolase (iolJ) of Halalkalibacterium halodurans (strain ATCC BAA-125 / DSM 18197 / FERM 7344 / JCM 9153 / C-125) (Bacillus halodurans).